Reading from the N-terminus, the 141-residue chain is Hemoglobin subunit alpha (141 aa).

The disordered stretch occupies residues 1–22; it reads VLSEDDKNRVRTSVGKNPELPG. In terms of domain architecture, Globin spans 1–141; the sequence is VLSEDDKNRV…VSEVLESKYR (141 aa). Histidine 58 contacts O2. Histidine 87 serves as a coordination point for heme b.

This sequence belongs to the globin family. Heterotetramer of two alpha chains and two beta chains. As to expression, red blood cells.

In terms of biological role, involved in oxygen transport from the lung to the various peripheral tissues. The sequence is that of Hemoglobin subunit alpha (HBA) from Vipera aspis (Aspic viper).